A 323-amino-acid polypeptide reads, in one-letter code: UPF0612 protein C569.01c (323 aa).

Coiled-coil stretches lie at residues 27 to 63 (IKRYERSVDSTLLEIDENKREALEKYIEERDRKMKYE) and 131 to 225 (NEMN…DARS).

It belongs to the UPF0612 family.

This is UPF0612 protein C569.01c from Schizosaccharomyces pombe (strain 972 / ATCC 24843) (Fission yeast).